Here is a 376-residue protein sequence, read N- to C-terminus: UDP-N-acetylglucosamine--N-acetylmuramyl-(pentapeptide) pyrophosphoryl-undecaprenol N-acetylglucosamine transferase (376 aa).

Residues 11-13, Asn-117, Arg-160, Ser-208, and Gln-310 each bind UDP-N-acetyl-alpha-D-glucosamine; that span reads TGG.

This sequence belongs to the glycosyltransferase 28 family. MurG subfamily.

The protein resides in the cell inner membrane. It carries out the reaction di-trans,octa-cis-undecaprenyl diphospho-N-acetyl-alpha-D-muramoyl-L-alanyl-D-glutamyl-meso-2,6-diaminopimeloyl-D-alanyl-D-alanine + UDP-N-acetyl-alpha-D-glucosamine = di-trans,octa-cis-undecaprenyl diphospho-[N-acetyl-alpha-D-glucosaminyl-(1-&gt;4)]-N-acetyl-alpha-D-muramoyl-L-alanyl-D-glutamyl-meso-2,6-diaminopimeloyl-D-alanyl-D-alanine + UDP + H(+). It participates in cell wall biogenesis; peptidoglycan biosynthesis. Functionally, cell wall formation. Catalyzes the transfer of a GlcNAc subunit on undecaprenyl-pyrophosphoryl-MurNAc-pentapeptide (lipid intermediate I) to form undecaprenyl-pyrophosphoryl-MurNAc-(pentapeptide)GlcNAc (lipid intermediate II). This Rickettsia massiliae (strain Mtu5) protein is UDP-N-acetylglucosamine--N-acetylmuramyl-(pentapeptide) pyrophosphoryl-undecaprenol N-acetylglucosamine transferase.